The following is a 311-amino-acid chain: Aspartate carbamoyltransferase catalytic subunit (311 aa).

Carbamoyl phosphate contacts are provided by arginine 55 and threonine 56. Lysine 85 serves as a coordination point for L-aspartate. Arginine 106, histidine 135, and glutamine 138 together coordinate carbamoyl phosphate. L-aspartate-binding residues include arginine 168 and arginine 230. 2 residues coordinate carbamoyl phosphate: leucine 268 and proline 269.

This sequence belongs to the aspartate/ornithine carbamoyltransferase superfamily. ATCase family. Heterododecamer (2C3:3R2) of six catalytic PyrB chains organized as two trimers (C3), and six regulatory PyrI chains organized as three dimers (R2).

It catalyses the reaction carbamoyl phosphate + L-aspartate = N-carbamoyl-L-aspartate + phosphate + H(+). It participates in pyrimidine metabolism; UMP biosynthesis via de novo pathway; (S)-dihydroorotate from bicarbonate: step 2/3. In terms of biological role, catalyzes the condensation of carbamoyl phosphate and aspartate to form carbamoyl aspartate and inorganic phosphate, the committed step in the de novo pyrimidine nucleotide biosynthesis pathway. This Escherichia fergusonii (strain ATCC 35469 / DSM 13698 / CCUG 18766 / IAM 14443 / JCM 21226 / LMG 7866 / NBRC 102419 / NCTC 12128 / CDC 0568-73) protein is Aspartate carbamoyltransferase catalytic subunit.